The chain runs to 377 residues: Early estrogen-induced gene 1 protein (377 aa).

Positions 2–145 (AFLTKKKKFK…ILKVNIGMSL (144 aa)) constitute a C2 NT-type domain. 3 stretches are compositionally biased toward polar residues: residues 160–173 (KTVS…SLQM), 188–198 (VRQNRSRQAML), and 222–234 (SRNS…QSKI). Residues 160 to 313 (KTVSPPGQDS…SVESQPTWVD (154 aa)) are disordered. Low complexity predominate over residues 256–269 (TSTSSSVSGGLSLT). The segment covering 274–285 (EPERDVKPEKPP) has biased composition (basic and acidic residues).

This sequence belongs to the EEIG family.

The protein resides in the nucleus. Its subcellular location is the cytoplasm. May be involved in osteoclast differentiation. The protein is Early estrogen-induced gene 1 protein (eeig1) of Xenopus laevis (African clawed frog).